Here is a 312-residue protein sequence, read N- to C-terminus: Olfactory receptor 5p57 (312 aa).

The Extracellular segment spans residues 1 to 25 (MEPGNYTVVTEFILLGLTDDITVSV). N5 is a glycosylation site (N-linked (GlcNAc...) asparagine). Residues 26 to 46 (ILFVMFLIVYSVTLMGNLNII) traverse the membrane as a helical segment. Residues 47-54 (VLIRTSPQ) lie on the Cytoplasmic side of the membrane. A helical transmembrane segment spans residues 55-75 (LHTPMYLFLSHLAFLDIGYSS). The Extracellular segment spans residues 76–99 (SVTPIMLRGFLRKGTFIPVAGCVA). C97 and C189 are disulfide-bonded. A helical membrane pass occupies residues 100–120 (QLCIVVAFGTSESFLLASMAY). Residues 121 to 133 (DRYVAICSPLLYS) lie on the Cytoplasmic side of the membrane. Residues 134 to 154 (TQMSSTVCILLVGTSYLGGWV) traverse the membrane as a helical segment. Residues 155-196 (NAWIFTGCSLNLSFCGPNKINHFFCDYSPLLKLSCSHDFSFE) are Extracellular-facing. N165 carries an N-linked (GlcNAc...) asparagine glycan. Residues 197 to 217 (VIPAISSGSIIVVTVFIIALS) traverse the membrane as a helical segment. Residues 218-237 (YVYILVSILKMRSTEGRQKA) lie on the Cytoplasmic side of the membrane. Residues 238–258 (FSTCTSHLTAVTLFFGTITFI) traverse the membrane as a helical segment. Topologically, residues 259 to 271 (YVMPQSSYSTDQN) are extracellular. The chain crosses the membrane as a helical span at residues 272 to 292 (KVVSVFYTVVIPMLNPLIYSF). Residues 293 to 312 (RNKEVKEAMKKLIAKTHWWS) are Cytoplasmic-facing.

This sequence belongs to the G-protein coupled receptor 1 family.

The protein resides in the cell membrane. Its function is as follows. Probable odorant receptor, which recognizes only aliphatic alcohols, suggesting that it may convey a 'woody' or 'sweet' sour. This is Olfactory receptor 5p57 from Mus musculus (Mouse).